A 767-amino-acid chain; its full sequence is U3 small nucleolar RNA-associated protein 14 homolog A (767 aa).

Positions 23–49 (TSNYPLSASEDEGDSDGERKHQKLLEA) are disordered. A phosphoserine mark is found at S29, S31, S37, S52, S77, and S81. K122 participates in a covalent cross-link: Glycyl lysine isopeptide (Lys-Gly) (interchain with G-Cter in SUMO2). Position 205 is a phosphothreonine (T205). Residues 317-346 (LEARQAMQEQLAKNKELTQKLQVVSESEEE) are a coiled coil. The disordered stretch occupies residues 338 to 554 (QVVSESEEEG…SKGKNKKEQM (217 aa)). Residues 342–355 (ESEEEGGADEEEAL) are compositionally biased toward acidic residues. A compositionally biased stretch (basic and acidic residues) spans 398–433 (AAHEFPENEENDKPVAEEDELLKELEKRRSLRKRSE). R431 carries the citrulline modification. K447 is covalently cross-linked (Glycyl lysine isopeptide (Lys-Gly) (interchain with G-Cter in SUMO2)). At S451 the chain carries Phosphoserine. A compositionally biased stretch (acidic residues) spans 486 to 498 (VWEEEPAPEEDEP). Residues 503 to 538 (RPERMRTLEELEELGKEDSLPNKERPRPSVEGEQVR) show a composition bias toward basic and acidic residues. K518 participates in a covalent cross-link: Glycyl lysine isopeptide (Lys-Gly) (interchain with G-Cter in SUMO2). R586 bears the Citrulline mark. The interval 730–767 (TAEDVDCRSSPRSDVPVMQSNPKQHSKHQKQRKKSSIG) is disordered. Basic residues predominate over residues 753–767 (QHSKHQKQRKKSSIG).

Belongs to the UTP14 family. Interacts with DHX37. Citrullinated by PADI4. As to expression, ubiquitously expressed.

It is found in the nucleus. It localises to the nucleolus. May be required for ribosome biogenesis. In Mus musculus (Mouse), this protein is U3 small nucleolar RNA-associated protein 14 homolog A (Utp14a).